A 330-amino-acid chain; its full sequence is Pantothenate synthetase 2 (330 aa).

His55 functions as the Proton donor in the catalytic mechanism. Residues Gly167 to Asp170, Val196, and Ala204 to Arg207 contribute to the ATP site.

This sequence belongs to the pantothenate synthetase family. In terms of assembly, homodimer.

Its subcellular location is the cytoplasm. It carries out the reaction (R)-pantoate + beta-alanine + ATP = (R)-pantothenate + AMP + diphosphate + H(+). The protein operates within cofactor biosynthesis; (R)-pantothenate biosynthesis; (R)-pantothenate from (R)-pantoate and beta-alanine: step 1/1. In terms of biological role, catalyzes the condensation of pantoate with beta-alanine in an ATP-dependent reaction via a pantoyl-adenylate intermediate. The sequence is that of Pantothenate synthetase 2 from Frankia alni (strain DSM 45986 / CECT 9034 / ACN14a).